The chain runs to 170 residues: Bifunctional protein PyrR (170 aa).

The PRPP-binding motif lies at 90–102 (LVLIDDVLMSGRT).

Belongs to the purine/pyrimidine phosphoribosyltransferase family. PyrR subfamily.

The enzyme catalyses UMP + diphosphate = 5-phospho-alpha-D-ribose 1-diphosphate + uracil. Its function is as follows. Regulates the transcription of the pyrimidine nucleotide (pyr) operon in response to exogenous pyrimidines. Also displays a weak uracil phosphoribosyltransferase activity which is not physiologically significant. This Pseudomonas syringae pv. tomato (strain ATCC BAA-871 / DC3000) protein is Bifunctional protein PyrR.